Consider the following 1023-residue polypeptide: RTX-I toxin determinant A from serotypes 5/10 (1023 aa).

Transmembrane regions (helical) follow at residues 226 to 256 (NNLP…ILSN), 297 to 326 (STTA…ADKF), and 367 to 406 (INSV…SGIL). Hemolysin-type calcium-binding repeat units follow at residues 730 to 747 (FGSR…DDEI), 748 to 765 (YGND…NDVI), 766 to 783 (HGGD…NDRL), 784 to 801 (IGGK…DDEL), 812 to 829 (LGGA…TNLF), and 830 to 847 (DGGV…KDIY).

This sequence belongs to the RTX prokaryotic toxin (TC 1.C.11) family. Post-translationally, palmitoylated by ApxIC. The toxin only becomes active when modified.

Its subcellular location is the secreted. The protein localises to the host cell membrane. In terms of biological role, one of the virulence factors of A.pleuropneumoniae, which has a strong hemolytic activity and is cytotoxic for alveolar macrophages and neutrophils. The chain is RTX-I toxin determinant A from serotypes 5/10 (apxIA) from Actinobacillus pleuropneumoniae (Haemophilus pleuropneumoniae).